The following is a 161-amino-acid chain: Probable chemoreceptor glutamine deamidase CheD (161 aa).

It belongs to the CheD family.

It catalyses the reaction L-glutaminyl-[protein] + H2O = L-glutamyl-[protein] + NH4(+). In terms of biological role, probably deamidates glutamine residues to glutamate on methyl-accepting chemotaxis receptors (MCPs), playing an important role in chemotaxis. This chain is Probable chemoreceptor glutamine deamidase CheD, found in Trichlorobacter lovleyi (strain ATCC BAA-1151 / DSM 17278 / SZ) (Geobacter lovleyi).